Consider the following 774-residue polypeptide: Potassium/sodium hyperpolarization-activated cyclic nucleotide-gated channel 3 (774 aa).

The segment at 1–48 (MEAEQRPAAGASEGATPGLEAVPPVAPPPATAASGPIPKSGPEPKRRH) is disordered. Topologically, residues 1 to 97 (MEAEQRPAAG…PYSDFRFYWD (97 aa)) are cytoplasmic. The interval 46–91 (RRHLGTLLQPTVNKFSLRVFGSHKAVEIEQERVKSAGAWIIHPYSD) is involved in subunit assembly. A helical transmembrane segment spans residues 98–118 (LIMLLLMVGNLIVLPVGITFF). Residues 119–124 (KEENSP) are Extracellular-facing. A helical transmembrane segment spans residues 125-145 (PWIVFNVLSDTFFLLDLVLNF). The Cytoplasmic segment spans residues 146–171 (RTGIVVEEGAEILLAPRAIRTRYLRT). The helical transmembrane segment at 172–192 (WFLVDLISSIPVDYIFLVVEL) threads the bilayer. Residues 193–201 (EPRLDAEVY) are Extracellular-facing. A helical; Voltage-sensor membrane pass occupies residues 202 to 222 (KTARALRIVRFTKILSLLRLL). Residues 223–253 (RLSRLIRYIHQWEEIFHMTYDLASAVVRIFN) are Cytoplasmic-facing. Residues 254–274 (LIGMMLLLCHWDGCLQFLVPM) form a helical membrane-spanning segment. The Extracellular portion of the chain corresponds to 275–297 (LQDFPPDCWVSINHMVNHSWGRQ). N291 is a glycosylation site (N-linked (GlcNAc...) asparagine). An intramembrane region (pore-forming) is located at residues 298 to 319 (YSHALFKAMSHMLCIGYGQQAP). Residues 320 to 329 (VGMPDVWLTM) lie on the Extracellular side of the membrane. The helical transmembrane segment at 330-350 (LSMIVGATCYAMFIGHATALI) threads the bilayer. Over 351–774 (QSLDSSRRQY…PRGLQLSANM (424 aa)) the chain is Cytoplasmic. Positions 354-774 (DSSRRQYQEK…PRGLQLSANM (421 aa)) are interaction with KCTD3. Positions 492, 493, 495, 502, 503, 543, and 546 each coordinate 3',5'-cyclic AMP. S634 carries the post-translational modification Phosphoserine. The interval 682–774 (SLSRAGRSQV…PRGLQLSANM (93 aa)) is disordered. The span at 751 to 763 (TAQPPRPPVPEPA) shows a compositional bias: pro residues.

It belongs to the potassium channel HCN family. Homotetramer. The potassium channel is composed of a homo- or heterotetrameric complex of pore-forming subunits. Interacts with HCN11. Interacts with KCTD3; this interaction increases cell surface expression and current density of this channel. Interacts with PEX5L. Detected in brain.

It is found in the cell membrane. It catalyses the reaction K(+)(in) = K(+)(out). The catalysed reaction is Na(+)(in) = Na(+)(out). Its activity is regulated as follows. Unlike HCN2 and HCN4, HCN3 is insensitive to cyclic nucleotides, such as cAMP or cGMP. This lack of sensitivity of HCN3, despite harboring a functional cyclic nucleotide-binding domain (CNBD), may be explained by its shorter C-terminal sequence, which may alter the normal autoinhibition of the channel. Inhibited by Cs(1+) and ZD7288. Phosphatidylinositol-4,5-bisphosphate (PIP(2)) shifts HCN3 activation to more depolarized potentials and accelerated activation kinetics. Hyperpolarization-activated ion channel that are permeable to sodium and potassium ions, with an about 3:1 preference for potassium ions. Contributes to the native pacemaker currents in heart (If) and in neurons (Ih). In particular, plays a pivotal role in maintaining excitability and promoting rhythmic burst firing within hypothalamic nuclei. Exerts a significant influence on the configuration of the cardiac action potential waveform. Does not appear to play a prominent role in the processing of acute, neuropathic, or inflammatory pain. The protein is Potassium/sodium hyperpolarization-activated cyclic nucleotide-gated channel 3 (HCN3) of Homo sapiens (Human).